A 142-amino-acid polypeptide reads, in one-letter code: Large ribosomal subunit protein uL13 (142 aa).

Belongs to the universal ribosomal protein uL13 family. As to quaternary structure, part of the 50S ribosomal subunit.

Functionally, this protein is one of the early assembly proteins of the 50S ribosomal subunit, although it is not seen to bind rRNA by itself. It is important during the early stages of 50S assembly. In Actinobacillus pleuropneumoniae serotype 5b (strain L20), this protein is Large ribosomal subunit protein uL13.